A 122-amino-acid chain; its full sequence is MIQQQTMLDVADNSGAKRVMCIKVLGGTRRKYASIGDVIVVSIKEAIPQAKVKKGEVARAVIVRTAREVKRPDGSYIRFDGNSAVLINKDLEPIGTRIFGPVARELRARKFMKIISLAPEVL.

It belongs to the universal ribosomal protein uL14 family. Part of the 50S ribosomal subunit. Forms a cluster with proteins L3 and L19. In the 70S ribosome, L14 and L19 interact and together make contacts with the 16S rRNA in bridges B5 and B8.

Its function is as follows. Binds to 23S rRNA. Forms part of two intersubunit bridges in the 70S ribosome. The polypeptide is Large ribosomal subunit protein uL14 (Anaeromyxobacter dehalogenans (strain 2CP-1 / ATCC BAA-258)).